A 414-amino-acid chain; its full sequence is Esterase FrsA (414 aa).

This sequence belongs to the FrsA family.

The enzyme catalyses a carboxylic ester + H2O = an alcohol + a carboxylate + H(+). In terms of biological role, catalyzes the hydrolysis of esters. The sequence is that of Esterase FrsA from Escherichia coli O127:H6 (strain E2348/69 / EPEC).